The following is a 295-amino-acid chain: Sulfotransferase 1A3 (295 aa).

A 3'-phosphoadenylyl sulfate-binding site is contributed by 48–53 (KSGTTW). Residues D86 and 106–108 (KSH) contribute to the dopamine site. The Proton acceptor role is filled by H108. Positions 130 and 138 each coordinate 3'-phosphoadenylyl sulfate. Residue E146 participates in dopamine binding. 3'-phosphoadenylyl sulfate is bound by residues Y193, 227–232 (TSFKEM), and 257–259 (RKG).

It belongs to the sulfotransferase 1 family. Homodimer. In terms of processing, the N-terminus is blocked. Liver, colon, kidney, lung, brain, spleen, small intestine, placenta and leukocyte.

It is found in the cytoplasm. It catalyses the reaction a phenol + 3'-phosphoadenylyl sulfate = an aryl sulfate + adenosine 3',5'-bisphosphate + H(+). It carries out the reaction 4-nitrophenol + 3'-phosphoadenylyl sulfate = 4-nitrophenyl sulfate + adenosine 3',5'-bisphosphate. The enzyme catalyses dopamine + 3'-phosphoadenylyl sulfate = dopamine 3-O-sulfate + adenosine 3',5'-bisphosphate + H(+). The catalysed reaction is dopamine + 3'-phosphoadenylyl sulfate = dopamine 4-O-sulfate + adenosine 3',5'-bisphosphate + H(+). It catalyses the reaction serotonin + 3'-phosphoadenylyl sulfate = serotonin O-sulfate + adenosine 3',5'-bisphosphate + H(+). It carries out the reaction (R)-adrenaline + 3'-phosphoadenylyl sulfate = (R)-adrenaline 4'-O-sulfate + adenosine 3',5'-bisphosphate + H(+). The enzyme catalyses (R)-noradrenaline + 3'-phosphoadenylyl sulfate = (R)-noradrenaline 4'-O-sulfate + adenosine 3',5'-bisphosphate + H(+). The catalysed reaction is 3,3',5-triiodo-L-thyronine + 3'-phosphoadenylyl sulfate = 3,3',5-triiodo-L-thyronine sulfate + adenosine 3',5'-bisphosphate + H(+). It catalyses the reaction 3,3',5'-triiodo-L-thyronine + 3'-phosphoadenylyl sulfate = 3,3',5'-triiodo-L-thyronine sulfate + adenosine 3',5'-bisphosphate + H(+). It carries out the reaction 3,3'-diiodo-L-thyronine + 3'-phosphoadenylyl sulfate = 3,3'-diiodo-L-thyronine sulfate + adenosine 3',5'-bisphosphate + H(+). The enzyme catalyses L-thyroxine + 3'-phosphoadenylyl sulfate = L-thyroxine sulfate + adenosine 3',5'-bisphosphate + H(+). In terms of biological role, sulfotransferase that utilizes 3'-phospho-5'-adenylyl sulfate (PAPS) as sulfonate donor to catalyze the sulfate conjugation of phenolic monoamines (neurotransmitters such as dopamine, (R)-adrenaline/epinephrine, (R)-noradrenaline/norepinephrine and serotonin) and phenolic and catechol drugs. Catalyzes the sulfation of T4 (L-thyroxine/3,5,3',5'-tetraiodothyronine), T3 (3,5,3'-triiodothyronine), rT3 (3,3',5'-triiodothyronine) and 3,3'-T2 (3,3'-diiodothyronine), with a substrate preference of 3,3'-T2 &gt; rT3 &gt; T3 &gt; T4. The polypeptide is Sulfotransferase 1A3 (SULT1A3) (Homo sapiens (Human)).